A 622-amino-acid chain; its full sequence is Probable potassium transport system protein Kup (622 aa).

The next 12 membrane-spanning stretches (helical) occupy residues 8-28 (LAVLTVGAIGVVYGDIGTSVL), 50-70 (ILSIFFWTLTVIVSLKYVSLV), 101-121 (VLLLVGIFGTSLFYGDGVITP), 137-157 (PTFTKAVIPTTLVILFGLFAM), 165-185 (IGKFFGPITIVWFAVLALLGV), 213-233 (ITFIILGAVVLCVTGAEALYA), 247-267 (WFSVVMPSLVLNYFGQGALLL), 285-305 (ALIPLVVLATLATVIASQALI), 337-357 (IYMPFVNWGLFVTIVLAVVMF), 366-386 (AYGIAVCTDMLITTILTFYVI), 393-413 (PLALCIAATSVFFLVDFAFFA), and 419-439 (LFAGGWFPLVIGGAVFTLMIT).

The protein belongs to the HAK/KUP transporter (TC 2.A.72) family.

The protein localises to the cell inner membrane. It catalyses the reaction K(+)(in) + H(+)(in) = K(+)(out) + H(+)(out). Its function is as follows. Transport of potassium into the cell. Likely operates as a K(+):H(+) symporter. The chain is Probable potassium transport system protein Kup from Polaromonas naphthalenivorans (strain CJ2).